The primary structure comprises 132 residues: Small ribosomal subunit protein uS8 (132 aa).

This sequence belongs to the universal ribosomal protein uS8 family. Part of the 30S ribosomal subunit. Contacts proteins S5 and S12.

Functionally, one of the primary rRNA binding proteins, it binds directly to 16S rRNA central domain where it helps coordinate assembly of the platform of the 30S subunit. This is Small ribosomal subunit protein uS8 from Clavibacter michiganensis subsp. michiganensis (strain NCPPB 382).